The following is a 211-amino-acid chain: Methylthioribulose-1-phosphate dehydratase (211 aa).

The Zn(2+) site is built by His101 and His103.

It belongs to the aldolase class II family. MtnB subfamily. It depends on Zn(2+) as a cofactor.

The catalysed reaction is 5-(methylsulfanyl)-D-ribulose 1-phosphate = 5-methylsulfanyl-2,3-dioxopentyl phosphate + H2O. The protein operates within amino-acid biosynthesis; L-methionine biosynthesis via salvage pathway; L-methionine from S-methyl-5-thio-alpha-D-ribose 1-phosphate: step 2/6. In terms of biological role, catalyzes the dehydration of methylthioribulose-1-phosphate (MTRu-1-P) into 2,3-diketo-5-methylthiopentyl-1-phosphate (DK-MTP-1-P). The chain is Methylthioribulose-1-phosphate dehydratase from Alcanivorax borkumensis (strain ATCC 700651 / DSM 11573 / NCIMB 13689 / SK2).